Reading from the N-terminus, the 1030-residue chain is Zinc finger and SCAN domain-containing protein 20 (1030 aa).

The segment at 22–42 is disordered; the sequence is DSWGSDSRPEKESHSPVPGPE. An SCAN box domain is found at 45-127; the sequence is RRCFRQFRYR…ALVEDWHREA (83 aa). 4 disordered regions span residues 178 to 201, 213 to 285, 411 to 441, and 578 to 600; these read DLSK…PTVP, GKSQ…DSAQ, SGGP…WEPE, and TGLP…GEME. The span at 225 to 240 shows a compositional bias: basic and acidic residues; sequence AKKEPCQDPAGGDRGD. 2 stretches are compositionally biased toward acidic residues: residues 426–441 and 589–600; these read SDTE…WEPE and EADDQEAWGEME. The C2H2-type 1; degenerate zinc finger occupies 697-719; sequence YGCDTRAKSFSRKVHFFAPQRTH. The C2H2-type 2; degenerate zinc finger occupies 725–747; it reads YKCLGSGKSFSDRANLSTHQRIH. 2 consecutive C2H2-type zinc fingers follow at residues 753–775 and 781–803; these read YRCL…QRTH and YKCG…QRVH. 2 disordered regions span residues 801–820 and 828–850; these read RVHL…NFGQ and WRRN…ADSP. 6 consecutive C2H2-type zinc fingers follow at residues 862-884, 890-912, 918-940, 946-968, 974-996, and 1002-1024; these read YSCP…QRIH, YECA…RRTH, HKCA…QRVH, YECP…QRIH, YKCR…QRIH, and YKCT…RRTH.

This sequence belongs to the krueppel C2H2-type zinc-finger protein family.

It is found in the nucleus. In terms of biological role, may be involved in transcriptional regulation. The chain is Zinc finger and SCAN domain-containing protein 20 (Zscan20) from Mus musculus (Mouse).